The chain runs to 572 residues: Transducin-like enhancer protein 6 (572 aa).

Disordered regions lie at residues 1–30 (MTSR…SSPT), 92–121 (QSEE…SSFE), and 174–236 (KAKP…VQEP). The span at 14 to 30 (KSTSPCPGISNSESSPT) shows a compositional bias: polar residues. WD repeat units lie at residues 284–322 (AHGE…AEDR), 332–372 (TPGA…LHVK), 377–416 (CAGL…VVRD), 419–456 (GYPD…KPLE), 458–497 (QFKS…RHMV), 499–538 (QKDS…KVFE), and 540–571 (PEMS…YQIT). Phosphoserine; by PKA is present on serine 510.

It belongs to the WD repeat Groucho/TLE family. In terms of assembly, homodimers. Component of the subcortical maternal complex (SCMC), at least composed of NLRP5, KHDC3, OOEP, and TLE6. Within the complex, interacts with NLRP5, KHDC3 and OOEP. The SCMC may facilitate translocation of its components between the nuclear and cytoplasmic compartments. As part of the SCMC interacts with the SCMC-associated protein ZBED3. As part of the SCMC interacts with the SCMC-associated protein NLRP4F. As part of the SCMC interacts with the SCMC-associated protein CFL1/Cofilin-1. Interacts with FOXG1/BF-1; the interaction inhibits TLE1 interaction with FOXG1/BF-1. Interacts with NFATC1. Interacts with PAX6. Component of the subcortical maternal complex (SCMC), at least composed of NLRP5, KHDC3L, OOEP, and TLE6 isoform 1. Within the complex, interacts with NLRP5, KHDC3L and OOEP. The SCMC may facilitate translocation of its components between the nuclear and cytoplasmic compartments.

It is found in the cytoplasm. The protein localises to the nucleus. Its function is as follows. Component of the subcortical maternal complex (SCMC), a multiprotein complex that plays a key role in early embryonic development. The SCMC complex is a structural constituent of cytoplasmic lattices, which consist in fibrous structures found in the cytoplasm of oocytes and preimplantation embryos. They are required to store maternal proteins critical for embryonic development, such as proteins that control epigenetic reprogramming of the preimplantation embryo, and prevent their degradation or activation. Also required for spermatogenesis: regulates spermatogonia proliferation and cell cycle progression, potentially via regulation of cell cycle regulatory genes such as; CEBPB, CEBPA, CSF3, PCNA, and CDK4. Suppresses FOXG1/BF-1-mediated transcriptional repression by inhibiting interaction of the transcriptional corepressor TLE1 with FOXG1 which promotes cortical neuron differentiation. Acts as a transcriptional corepressor of NFATC1-mediated gene expression by contributing to PAX6-mediated repression. Component of the subcortical maternal complex (SCMC), a multiprotein complex that plays a key role in early embryonic development. This is Transducin-like enhancer protein 6 from Homo sapiens (Human).